The chain runs to 227 residues: Cytochrome c oxidase subunit 2 (227 aa).

The Mitochondrial intermembrane portion of the chain corresponds to 1–14 (MAYPFQLGLQDATS). The chain crosses the membrane as a helical span at residues 15–45 (PIMEELMNFHDHTLMIVFLISSLVLYIISLM). The Mitochondrial matrix portion of the chain corresponds to 46 to 59 (LTTKLTHTSTMDAQ). A helical membrane pass occupies residues 60–87 (EVETIWTILPAAILILIALPSLRILYMM). Over 88-227 (DEINNPALTV…YFENWSASMI (140 aa)) the chain is Mitochondrial intermembrane. The Cu cation site is built by His161, Cys196, Glu198, Cys200, His204, and Met207. Residue Glu198 coordinates Mg(2+). Phosphotyrosine is present on Tyr218.

It belongs to the cytochrome c oxidase subunit 2 family. In terms of assembly, component of the cytochrome c oxidase (complex IV, CIV), a multisubunit enzyme composed of 14 subunits. The complex is composed of a catalytic core of 3 subunits MT-CO1, MT-CO2 and MT-CO3, encoded in the mitochondrial DNA, and 11 supernumerary subunits COX4I, COX5A, COX5B, COX6A, COX6B, COX6C, COX7A, COX7B, COX7C, COX8 and NDUFA4, which are encoded in the nuclear genome. The complex exists as a monomer or a dimer and forms supercomplexes (SCs) in the inner mitochondrial membrane with NADH-ubiquinone oxidoreductase (complex I, CI) and ubiquinol-cytochrome c oxidoreductase (cytochrome b-c1 complex, complex III, CIII), resulting in different assemblies (supercomplex SCI(1)III(2)IV(1) and megacomplex MCI(2)III(2)IV(2)). Found in a complex with TMEM177, COA6, COX18, COX20, SCO1 and SCO2. Interacts with TMEM177 in a COX20-dependent manner. Interacts with COX20. Interacts with COX16. Cu cation serves as cofactor.

Its subcellular location is the mitochondrion inner membrane. It carries out the reaction 4 Fe(II)-[cytochrome c] + O2 + 8 H(+)(in) = 4 Fe(III)-[cytochrome c] + 2 H2O + 4 H(+)(out). Its function is as follows. Component of the cytochrome c oxidase, the last enzyme in the mitochondrial electron transport chain which drives oxidative phosphorylation. The respiratory chain contains 3 multisubunit complexes succinate dehydrogenase (complex II, CII), ubiquinol-cytochrome c oxidoreductase (cytochrome b-c1 complex, complex III, CIII) and cytochrome c oxidase (complex IV, CIV), that cooperate to transfer electrons derived from NADH and succinate to molecular oxygen, creating an electrochemical gradient over the inner membrane that drives transmembrane transport and the ATP synthase. Cytochrome c oxidase is the component of the respiratory chain that catalyzes the reduction of oxygen to water. Electrons originating from reduced cytochrome c in the intermembrane space (IMS) are transferred via the dinuclear copper A center (CU(A)) of subunit 2 and heme A of subunit 1 to the active site in subunit 1, a binuclear center (BNC) formed by heme A3 and copper B (CU(B)). The BNC reduces molecular oxygen to 2 water molecules using 4 electrons from cytochrome c in the IMS and 4 protons from the mitochondrial matrix. The chain is Cytochrome c oxidase subunit 2 (MT-CO2) from Lemniscomys barbarus (Barbary striped grass mouse).